Here is a 1381-residue protein sequence, read N- to C-terminus: Regulator of G-protein signaling 12 (1381 aa).

Positions 21-98 (SVEVARGRAG…VLHMVIAEGT (78 aa)) constitute a PDZ domain. Phosphoserine is present on residues serine 171 and serine 194. Lysine 195 participates in a covalent cross-link: Glycyl lysine isopeptide (Lys-Gly) (interchain with G-Cter in SUMO2). The region spanning 223-390 (SILNVAMVVG…VLQFISVLYR (168 aa)) is the PID domain. 3 disordered regions span residues 409–428 (ADAH…IGNF), 442–528 (LGGG…GAAG), and 620–644 (RKTK…SQRT). The segment covering 412–428 (HQNNSTSSNSDSGIGNF) has biased composition (polar residues). Omega-N-methylarginine occurs at positions 524 and 633. 2 positions are modified to phosphoserine: serine 661 and serine 671. Residues 715 to 832 (SFERLLQDPV…LKSQLYQECV (118 aa)) enclose the RGS domain. Residues 842-942 (PDSQQVPSSP…ESQGSVSSAG (101 aa)) form a disordered region. The span at 849-869 (SSPASKHSISSDHSNVSTPKK) shows a compositional bias: low complexity. Phosphoserine occurs at positions 850 and 879. Residues 914–923 (DHGDHAHDAP) are compositionally biased toward basic and acidic residues. Serine 943 bears the Phosphoserine mark. RBD domains follow at residues 962-1032 (KHCC…LEKR) and 1034-1104 (LFRL…LEER). Residues 1102-1117 (EERDPSRGKVSTDKQK) show a composition bias toward basic and acidic residues. The tract at residues 1102–1169 (EERDPSRGKV…RDPRLSKREE (68 aa)) is disordered. Over residues 1122 to 1132 (KQNSAVNSSPR) the composition is skewed to polar residues. Positions 1151-1169 (IRGENGKSARDPRLSKREE) are enriched in basic and acidic residues. The 23-residue stretch at 1187 to 1209 (AEEFFELISKAQSNRADDQRGLL) folds into the GoLoco domain. Disordered regions lie at residues 1227-1318 (SELA…QEGT) and 1347-1381 (LMGE…TSRF). A compositionally biased stretch (low complexity) spans 1261–1280 (SDSPATSPASAQSPCSAYSP). Residues 1361–1381 (LPPPPTPQDTPGPPRPGTSRF) show a composition bias toward pro residues.

In terms of assembly, interacts with GNAI1, GNAI2 and GNAI3; the interactions are GDP-dependent. As to expression, expressed in brain.

The protein resides in the nucleus. It localises to the cytoplasm. The protein localises to the cell projection. It is found in the dendrite. Its subcellular location is the synapse. In terms of biological role, regulates G protein-coupled receptor signaling cascades. Inhibits signal transduction by increasing the GTPase activity of G protein alpha subunits, thereby driving them into their inactive GDP-bound form. The chain is Regulator of G-protein signaling 12 (Rgs12) from Mus musculus (Mouse).